The sequence spans 217 residues: Large ribosomal subunit protein uL4 (217 aa).

Belongs to the universal ribosomal protein uL4 family. Part of the 50S ribosomal subunit.

Functionally, one of the primary rRNA binding proteins, this protein initially binds near the 5'-end of the 23S rRNA. It is important during the early stages of 50S assembly. It makes multiple contacts with different domains of the 23S rRNA in the assembled 50S subunit and ribosome. Forms part of the polypeptide exit tunnel. In Koribacter versatilis (strain Ellin345), this protein is Large ribosomal subunit protein uL4.